The sequence spans 125 residues: MIKLDFEKMGGLIPAVIQDHESGEVLMVAFMDEKTLNLTLETGKTWFFSRTRNKYWMKGEESGNTQEVKEVLTDCDADTVVIKVKQNGPAACHTGNRSCFYVKWENGEWVEHSNPLFDPNEVYKK.

Mg(2+) is bound at residue aspartate 74. Position 75 (cysteine 75) interacts with Zn(2+). Residues aspartate 76 and aspartate 78 each coordinate Mg(2+). Residues cysteine 92 and cysteine 99 each coordinate Zn(2+).

It belongs to the PRA-CH family. In terms of assembly, homodimer. Mg(2+) is required as a cofactor. It depends on Zn(2+) as a cofactor.

The protein localises to the cytoplasm. It carries out the reaction 1-(5-phospho-beta-D-ribosyl)-5'-AMP + H2O = 1-(5-phospho-beta-D-ribosyl)-5-[(5-phospho-beta-D-ribosylamino)methylideneamino]imidazole-4-carboxamide. The protein operates within amino-acid biosynthesis; L-histidine biosynthesis; L-histidine from 5-phospho-alpha-D-ribose 1-diphosphate: step 3/9. In terms of biological role, catalyzes the hydrolysis of the adenine ring of phosphoribosyl-AMP. This chain is Phosphoribosyl-AMP cyclohydrolase, found in Geotalea uraniireducens (strain Rf4) (Geobacter uraniireducens).